Here is an 82-residue protein sequence, read N- to C-terminus: MAEVSSSTVRRPFHRRRKTCPFSGANAPKIDYKDVRLLQRYISERGKIVPSRITAVSQKKQRELAKAIKRARFLGLLPYVVA.

The interval 1 to 20 (MAEVSSSTVRRPFHRRRKTC) is disordered.

It belongs to the bacterial ribosomal protein bS18 family. As to quaternary structure, part of the 30S ribosomal subunit. Forms a tight heterodimer with protein bS6.

Its function is as follows. Binds as a heterodimer with protein bS6 to the central domain of the 16S rRNA, where it helps stabilize the platform of the 30S subunit. In Allorhizobium ampelinum (strain ATCC BAA-846 / DSM 112012 / S4) (Agrobacterium vitis (strain S4)), this protein is Small ribosomal subunit protein bS18.